A 469-amino-acid polypeptide reads, in one-letter code: 2-oxoisovalerate dehydrogenase subunit beta, mitochondrial (469 aa).

A mitochondrion-targeting transit peptide spans 1 to 40; that stretch reads MKRSTVVIRPSARALSRQASSQSFLLARSSALTSRQRRLY. A thiamine diphosphate-binding site is contributed by tyrosine 167. Residues glycine 194, leucine 196, and threonine 197 each coordinate K(+).

Heterotetramer of 2 alpha and 2 beta chains. The cofactor is thiamine diphosphate.

It is found in the mitochondrion matrix. The enzyme catalyses N(6)-[(R)-lipoyl]-L-lysyl-[protein] + 3-methyl-2-oxobutanoate + H(+) = N(6)-[(R)-S(8)-2-methylpropanoyldihydrolipoyl]-L-lysyl-[protein] + CO2. Functionally, the branched-chain alpha-keto dehydrogenase complex catalyzes the overall conversion of alpha-keto acids to acyl-CoA and CO(2). It contains multiple copies of three enzymatic components: branched-chain alpha-keto acid decarboxylase (E1), lipoamide acyltransferase (E2) and lipoamide dehydrogenase (E3). This Chaetomium thermophilum (strain DSM 1495 / CBS 144.50 / IMI 039719) (Thermochaetoides thermophila) protein is 2-oxoisovalerate dehydrogenase subunit beta, mitochondrial.